Consider the following 364-residue polypeptide: DNA polymerase IV (364 aa).

The 185-residue stretch at Ile14 to Gly198 folds into the UmuC domain. Mg(2+) contacts are provided by Asp18 and Asp116. Residue Glu117 is part of the active site.

Belongs to the DNA polymerase type-Y family. Monomer. Mg(2+) is required as a cofactor.

The protein resides in the cytoplasm. The enzyme catalyses DNA(n) + a 2'-deoxyribonucleoside 5'-triphosphate = DNA(n+1) + diphosphate. In terms of biological role, poorly processive, error-prone DNA polymerase involved in untargeted mutagenesis. Copies undamaged DNA at stalled replication forks, which arise in vivo from mismatched or misaligned primer ends. These misaligned primers can be extended by PolIV. Exhibits no 3'-5' exonuclease (proofreading) activity. May be involved in translesional synthesis, in conjunction with the beta clamp from PolIII. In Streptococcus pyogenes serotype M4 (strain MGAS10750), this protein is DNA polymerase IV.